The following is a 64-amino-acid chain: Conotoxin Pu5.2 (64 aa).

The first 22 residues, 1–22, serve as a signal peptide directing secretion; the sequence is MRCVPVFVILLLLIASTPSVDA. The propeptide occupies 23–52; that stretch reads RPNPKDDVPLASFHGADNANRILRTLWNLR. An Isoleucine amide modification is found at I63.

The protein belongs to the conotoxin T superfamily. Post-translationally, contains 2 disulfide bonds that can be either 'C1-C3, C2-C4' or 'C1-C4, C2-C3', since these disulfide connectivities have been observed for conotoxins with cysteine framework V (for examples, see AC P0DQQ7 and AC P81755). In terms of tissue distribution, expressed by the venom duct.

The protein localises to the secreted. This Conus pulicarius (Flea-bitten cone) protein is Conotoxin Pu5.2.